A 149-amino-acid polypeptide reads, in one-letter code: MDLILLQKVTNLGNLGDKVSVKPGYGRNFLVPQGKAVPATAANVEAFETKRAEYEAKASSILADAQSRATKFEGASVTICAHASTEGKLYGSVGPRDIAEAFTAAGLPLEKSEVILGEGAFRNVGEYDVVLHLHADVETTVKVIVESDA.

This sequence belongs to the bacterial ribosomal protein bL9 family.

In terms of biological role, binds to the 23S rRNA. In Xanthomonas oryzae pv. oryzae (strain MAFF 311018), this protein is Large ribosomal subunit protein bL9.